Reading from the N-terminus, the 98-residue chain is NADH-ubiquinone oxidoreductase chain 4L (98 aa).

The next 3 helical transmembrane spans lie at 1–21, 27–47, and 61–81; these read MIPTYMNIMLAFTISLLGMLT, VASLLCLEGMMMSLFIMTTLI, and IILLVFAACEAAVGLALLISI.

It belongs to the complex I subunit 4L family. As to quaternary structure, core subunit of respiratory chain NADH dehydrogenase (Complex I) which is composed of 45 different subunits.

It is found in the mitochondrion inner membrane. The catalysed reaction is a ubiquinone + NADH + 5 H(+)(in) = a ubiquinol + NAD(+) + 4 H(+)(out). In terms of biological role, core subunit of the mitochondrial membrane respiratory chain NADH dehydrogenase (Complex I) which catalyzes electron transfer from NADH through the respiratory chain, using ubiquinone as an electron acceptor. Part of the enzyme membrane arm which is embedded in the lipid bilayer and involved in proton translocation. In Macaca nigra (Celebes black macaque), this protein is NADH-ubiquinone oxidoreductase chain 4L (MT-ND4L).